Consider the following 410-residue polypeptide: Multifunctional CCA protein (410 aa).

Positions 8 and 11 each coordinate ATP. CTP is bound by residues Gly-8 and Arg-11. 2 residues coordinate Mg(2+): Glu-21 and Asp-23. Positions 91, 137, and 140 each coordinate ATP. 3 residues coordinate CTP: Arg-91, Arg-137, and Arg-140. Residues 228–329 form the HD domain; the sequence is TLLHQFLCLK…WKLFKSLDIL (102 aa).

It belongs to the tRNA nucleotidyltransferase/poly(A) polymerase family. Bacterial CCA-adding enzyme type 1 subfamily. As to quaternary structure, monomer. Can also form homodimers and oligomers. Requires Mg(2+) as cofactor. It depends on Ni(2+) as a cofactor.

The enzyme catalyses a tRNA precursor + 2 CTP + ATP = a tRNA with a 3' CCA end + 3 diphosphate. The catalysed reaction is a tRNA with a 3' CCA end + 2 CTP + ATP = a tRNA with a 3' CCACCA end + 3 diphosphate. In terms of biological role, catalyzes the addition and repair of the essential 3'-terminal CCA sequence in tRNAs without using a nucleic acid template. Adds these three nucleotides in the order of C, C, and A to the tRNA nucleotide-73, using CTP and ATP as substrates and producing inorganic pyrophosphate. tRNA 3'-terminal CCA addition is required both for tRNA processing and repair. Also involved in tRNA surveillance by mediating tandem CCA addition to generate a CCACCA at the 3' terminus of unstable tRNAs. While stable tRNAs receive only 3'-terminal CCA, unstable tRNAs are marked with CCACCA and rapidly degraded. The polypeptide is Multifunctional CCA protein (Alcanivorax borkumensis (strain ATCC 700651 / DSM 11573 / NCIMB 13689 / SK2)).